The following is a 264-amino-acid chain: ATP synthase subunit a (264 aa).

6 helical membrane passes run isoleucine 32 to valine 52, valine 89 to methionine 109, aspartate 134 to isoleucine 154, isoleucine 177 to leucine 197, leucine 208 to valine 228, and leucine 235 to valine 255.

The protein belongs to the ATPase A chain family. As to quaternary structure, F-type ATPases have 2 components, CF(1) - the catalytic core - and CF(0) - the membrane proton channel. CF(1) has five subunits: alpha(3), beta(3), gamma(1), delta(1), epsilon(1). CF(0) has three main subunits: a(1), b(2) and c(9-12). The alpha and beta chains form an alternating ring which encloses part of the gamma chain. CF(1) is attached to CF(0) by a central stalk formed by the gamma and epsilon chains, while a peripheral stalk is formed by the delta and b chains.

It localises to the cell inner membrane. Its function is as follows. Key component of the proton channel; it plays a direct role in the translocation of protons across the membrane. This is ATP synthase subunit a from Shewanella piezotolerans (strain WP3 / JCM 13877).